The primary structure comprises 321 residues: Ribonuclease Z (321 aa).

H62, H64, D66, H67, H139, D210, and H268 together coordinate Zn(2+). The active-site Proton acceptor is D66.

It belongs to the RNase Z family. As to quaternary structure, homodimer. Requires Zn(2+) as cofactor.

The catalysed reaction is Endonucleolytic cleavage of RNA, removing extra 3' nucleotides from tRNA precursor, generating 3' termini of tRNAs. A 3'-hydroxy group is left at the tRNA terminus and a 5'-phosphoryl group is left at the trailer molecule.. Zinc phosphodiesterase, which displays some tRNA 3'-processing endonuclease activity. Probably involved in tRNA maturation, by removing a 3'-trailer from precursor tRNA. This Trichodesmium erythraeum (strain IMS101) protein is Ribonuclease Z.